The primary structure comprises 170 residues: CASP-like protein 1F1 (170 aa).

The Cytoplasmic segment spans residues 1-16 (MMGDNEGRRTPLLNLG). Residues 17–37 (VQVSMRVLTIGAAMASMWVMI) traverse the membrane as a helical segment. Topologically, residues 38-62 (TNREVASVYGIAFEAKYSYSSAFRY) are extracellular. A helical transmembrane segment spans residues 63–83 (LVYAQIAVCAATLFTLVWACL). The Cytoplasmic portion of the chain corresponds to 84–88 (AVRRR). Residues 89 to 109 (GLVFALFFFDLLTTLTAISAF) traverse the membrane as a helical segment. The Extracellular segment spans residues 110 to 141 (SAAFAEGYVGKYGNKQAGWLPICGYVHGYCSR). A helical transmembrane segment spans residues 142 to 162 (VTISLAMSFASFILLFILTVL). Residues 163 to 170 (TASAARHY) lie on the Cytoplasmic side of the membrane.

It belongs to the Casparian strip membrane proteins (CASP) family. Homodimer and heterodimers. In flowers, expressed in the anther wall.

The protein resides in the cell membrane. The sequence is that of CASP-like protein 1F1 from Arabidopsis thaliana (Mouse-ear cress).